We begin with the raw amino-acid sequence, 552 residues long: Hyaluronan synthase 2 (552 aa).

The Cytoplasmic portion of the chain corresponds to 1–11 (MHCERFLCILR). A helical transmembrane segment spans residues 12–32 (IIGTTLFGVSLLLGITAAYIV). Residues 33-45 (GYQFIQTDNYYFS) are Extracellular-facing. The chain crosses the membrane as a helical span at residues 46-66 (FGLYGAFLASHLIIQSLFAFL). Residues 67–374 (EHRKMKKSLE…NAMWFHKHHL (308 aa)) are Cytoplasmic-facing. Residue T110 is modified to Phosphothreonine. Residue K190 forms a Glycyl lysine isopeptide (Lys-Gly) (interchain with G-Cter in ubiquitin) linkage. The O-linked (GlcNAc) serine glycan is linked to S221. T328 carries the phosphothreonine modification. The chain crosses the membrane as a helical span at residues 375-395 (WMTYEAVITGFFPFFLIATVI). The Extracellular portion of the chain corresponds to 396–402 (QLFYRGK). Residues 403–423 (IWNTLLFLLTVQLVGLIKSSF) form a helical membrane-spanning segment. The Cytoplasmic portion of the chain corresponds to 424-429 (ASCLRG). Residues 430-450 (NIVMVFMSLYSVLYMSSLLPA) traverse the membrane as a helical segment. At 451-475 (KMFAIATINKAGWGTSGRKTIVVNF) the chain is on the extracellular side. A helical membrane pass occupies residues 476 to 496 (IGLIPVSVWFTILLGGVIFTI). At 497–510 (YKESKKPFSESKQT) the chain is on the cytoplasmic side. A helical transmembrane segment spans residues 511–531 (VLIVGTLLYACYWVMLLTLYV). Topologically, residues 532-552 (VLINKCGRRKKGQQYDMVLDV) are extracellular.

The protein belongs to the NodC/HAS family. In terms of assembly, homodimer; dimerization promotes enzymatic activity. Forms heterodimer with HAS3. Forms heterodimer with HAS1. Mg(2+) serves as cofactor. Phosphorylation at Thr-328 is essential for hyaluronan synthase activity. Post-translationally, O-GlcNAcylation at Ser-221 increases the stability of HAS2 and plasma membrane localization. In terms of processing, ubiquitination at Lys-190; this ubiquitination is essential for hyaluronan synthase activity and homo- or hetero-oligomerization. Can also be poly-ubiquitinated. Deubiquitinated by USP17 and USP4. USP17 efficiently removes 'Lys-63'- and 'Lys-48'-linked polyubiquitin chains, whereas USP4 preferentially removes monoubiquitination and, partially, both 'Lys-63'- and 'Lys-48'-linked polyubiquitin chain. As to expression, expressed in corneal endothelial cells.

It is found in the cell membrane. Its subcellular location is the endoplasmic reticulum membrane. It localises to the vesicle. The protein resides in the golgi apparatus membrane. The protein localises to the lysosome. It carries out the reaction [hyaluronan](n) + UDP-N-acetyl-alpha-D-glucosamine = N-acetyl-beta-D-glucosaminyl-(1-&gt;4)-[hyaluronan](n) + UDP + H(+). The catalysed reaction is N-acetyl-beta-D-glucosaminyl-(1-&gt;4)-[hyaluronan](n) + UDP-alpha-D-glucuronate = [hyaluronan](n+1) + UDP + H(+). It participates in glycan biosynthesis; hyaluronan biosynthesis. Catalyzes the addition of GlcNAc or GlcUA monosaccharides to the nascent hyaluronan polymer. Therefore, it is essential to hyaluronan synthesis a major component of most extracellular matrices that has a structural role in tissues architectures and regulates cell adhesion, migration and differentiation. This is one of three isoenzymes responsible for cellular hyaluronan synthesis and it is particularly responsible for the synthesis of high molecular mass hyaluronan. This is Hyaluronan synthase 2 (HAS2) from Bos taurus (Bovine).